Consider the following 396-residue polypeptide: Ribosomal RNA large subunit methyltransferase I (396 aa).

The region spanning 2–79 (SVFIYLVKGR…KEETVDLDFF (78 aa)) is the PUA domain.

The protein belongs to the methyltransferase superfamily. RlmI family.

Its subcellular location is the cytoplasm. It carries out the reaction cytidine(1962) in 23S rRNA + S-adenosyl-L-methionine = 5-methylcytidine(1962) in 23S rRNA + S-adenosyl-L-homocysteine + H(+). Functionally, specifically methylates the cytosine at position 1962 (m5C1962) of 23S rRNA. The protein is Ribosomal RNA large subunit methyltransferase I of Aeromonas salmonicida (strain A449).